The primary structure comprises 230 residues: Putative N-acetylmannosamine-6-phosphate 2-epimerase (230 aa).

This sequence belongs to the NanE family.

It carries out the reaction an N-acyl-D-glucosamine 6-phosphate = an N-acyl-D-mannosamine 6-phosphate. Its pathway is amino-sugar metabolism; N-acetylneuraminate degradation; D-fructose 6-phosphate from N-acetylneuraminate: step 3/5. Converts N-acetylmannosamine-6-phosphate (ManNAc-6-P) to N-acetylglucosamine-6-phosphate (GlcNAc-6-P). In Malacoplasma penetrans (strain HF-2) (Mycoplasma penetrans), this protein is Putative N-acetylmannosamine-6-phosphate 2-epimerase.